Here is a 503-residue protein sequence, read N- to C-terminus: Lysine--tRNA ligase (503 aa).

Glutamate 413 and glutamate 420 together coordinate Mg(2+).

This sequence belongs to the class-II aminoacyl-tRNA synthetase family. In terms of assembly, homodimer. Requires Mg(2+) as cofactor.

The protein localises to the cytoplasm. It catalyses the reaction tRNA(Lys) + L-lysine + ATP = L-lysyl-tRNA(Lys) + AMP + diphosphate. The polypeptide is Lysine--tRNA ligase (Actinobacillus succinogenes (strain ATCC 55618 / DSM 22257 / CCUG 43843 / 130Z)).